We begin with the raw amino-acid sequence, 642 residues long: 3D-(3,5/4)-trihydroxycyclohexane-1,2-dione hydrolase (642 aa).

Glutamate 71 provides a ligand contact to thiamine diphosphate. The segment at 446-526 is thiamine pyrophosphate binding; that stretch reads SLPGDVQRIW…INILVFDNSG (81 aa). Mg(2+) contacts are provided by aspartate 497 and asparagine 524.

It belongs to the TPP enzyme family. Mg(2+) serves as cofactor. Requires thiamine diphosphate as cofactor.

It carries out the reaction 3D-3,5/4-trihydroxycyclohexane-1,2-dione + H2O = 5-deoxy-D-glucuronate + H(+). Its pathway is polyol metabolism; myo-inositol degradation into acetyl-CoA; acetyl-CoA from myo-inositol: step 3/7. In terms of biological role, involved in the cleavage of the C1-C2 bond of 3D-(3,5/4)-trihydroxycyclohexane-1,2-dione (THcHDO) to yield 5-deoxy-glucuronate (5DG). This Lacticaseibacillus casei (Lactobacillus casei) protein is 3D-(3,5/4)-trihydroxycyclohexane-1,2-dione hydrolase.